The sequence spans 293 residues: Ribosomal protein L11 methyltransferase (293 aa).

Residues T145, G166, D188, and N230 each coordinate S-adenosyl-L-methionine.

The protein belongs to the methyltransferase superfamily. PrmA family.

It localises to the cytoplasm. It catalyses the reaction L-lysyl-[protein] + 3 S-adenosyl-L-methionine = N(6),N(6),N(6)-trimethyl-L-lysyl-[protein] + 3 S-adenosyl-L-homocysteine + 3 H(+). Its function is as follows. Methylates ribosomal protein L11. The chain is Ribosomal protein L11 methyltransferase from Shewanella woodyi (strain ATCC 51908 / MS32).